Reading from the N-terminus, the 660-residue chain is DNA mismatch repair protein MutL (660 aa).

Belongs to the DNA mismatch repair MutL/HexB family.

Its function is as follows. This protein is involved in the repair of mismatches in DNA. It is required for dam-dependent methyl-directed DNA mismatch repair. May act as a 'molecular matchmaker', a protein that promotes the formation of a stable complex between two or more DNA-binding proteins in an ATP-dependent manner without itself being part of a final effector complex. The polypeptide is DNA mismatch repair protein MutL (Streptococcus pyogenes serotype M1).